Consider the following 508-residue polypeptide: ATP synthase subunit alpha, chloroplastic (508 aa).

An ATP-binding site is contributed by 172 to 179 (GDRQTGKT).

This sequence belongs to the ATPase alpha/beta chains family. F-type ATPases have 2 components, CF(1) - the catalytic core - and CF(0) - the membrane proton channel. CF(1) has five subunits: alpha(3), beta(3), gamma(1), delta(1), epsilon(1). CF(0) has four main subunits: a, b, b' and c.

It localises to the plastid. Its subcellular location is the chloroplast thylakoid membrane. It carries out the reaction ATP + H2O + 4 H(+)(in) = ADP + phosphate + 5 H(+)(out). In terms of biological role, produces ATP from ADP in the presence of a proton gradient across the membrane. The alpha chain is a regulatory subunit. The chain is ATP synthase subunit alpha, chloroplastic from Angiopteris evecta (Mule's foot fern).